A 292-amino-acid chain; its full sequence is ATP phosphoribosyltransferase (292 aa).

It belongs to the ATP phosphoribosyltransferase family. Long subfamily. The cofactor is Mg(2+).

Its subcellular location is the cytoplasm. It catalyses the reaction 1-(5-phospho-beta-D-ribosyl)-ATP + diphosphate = 5-phospho-alpha-D-ribose 1-diphosphate + ATP. The protein operates within amino-acid biosynthesis; L-histidine biosynthesis; L-histidine from 5-phospho-alpha-D-ribose 1-diphosphate: step 1/9. With respect to regulation, feedback inhibited by histidine. In terms of biological role, catalyzes the condensation of ATP and 5-phosphoribose 1-diphosphate to form N'-(5'-phosphoribosyl)-ATP (PR-ATP). Has a crucial role in the pathway because the rate of histidine biosynthesis seems to be controlled primarily by regulation of HisG enzymatic activity. This chain is ATP phosphoribosyltransferase, found in Desulfatibacillum aliphaticivorans.